Consider the following 284-residue polypeptide: Diaminopimelate epimerase (284 aa).

2 residues coordinate substrate: asparagine 13 and asparagine 70. The active-site Proton donor is cysteine 79. Substrate-binding positions include 80 to 81, asparagine 167, asparagine 200, and 218 to 219; these read GN and ER. The Proton acceptor role is filled by cysteine 227. 228–229 serves as a coordination point for substrate; sequence GT.

It belongs to the diaminopimelate epimerase family. Homodimer.

Its subcellular location is the cytoplasm. The catalysed reaction is (2S,6S)-2,6-diaminopimelate = meso-2,6-diaminopimelate. The protein operates within amino-acid biosynthesis; L-lysine biosynthesis via DAP pathway; DL-2,6-diaminopimelate from LL-2,6-diaminopimelate: step 1/1. Functionally, catalyzes the stereoinversion of LL-2,6-diaminopimelate (L,L-DAP) to meso-diaminopimelate (meso-DAP), a precursor of L-lysine and an essential component of the bacterial peptidoglycan. This is Diaminopimelate epimerase from Prochlorococcus marinus (strain NATL2A).